A 645-amino-acid chain; its full sequence is Lipase 1 (645 aa).

An N-terminal signal peptide occupies residues 1-24; sequence MKRSFIFAPGMLALSISAISNAHA. S34 acts as the Nucleophile in catalysis. Active-site residues include D327 and H330. The Autotransporter domain occupies 383 to 645; the sequence is NEQGKLGVFG…SFSLGVNASF (263 aa).

The protein belongs to the 'GDSL' lipolytic enzyme family.

The protein resides in the secreted. It carries out the reaction a triacylglycerol + H2O = a diacylglycerol + a fatty acid + H(+). The polypeptide is Lipase 1 (lip-1) (Photorhabdus luminescens (Xenorhabdus luminescens)).